A 538-amino-acid polypeptide reads, in one-letter code: Cytosolic Fe-S cluster assembly factor NAR1 homolog (538 aa).

[4Fe-4S] cluster contacts are provided by Cys-19, Cys-64, Cys-67, Cys-70, Cys-218, Cys-273, Cys-453, and Cys-457.

It belongs to the NARF family.

It localises to the cytoplasm. It is found in the nucleus. In terms of biological role, component of the cytosolic Fe/S protein assembly machinery. Required for maturation of extramitochondrial Fe/S proteins. May play a role in the transfer of pre-assembled Fe/S clusters to target apoproteins. This is Cytosolic Fe-S cluster assembly factor NAR1 homolog from Schizosaccharomyces pombe (strain 972 / ATCC 24843) (Fission yeast).